A 157-amino-acid chain; its full sequence is RNA pyrophosphohydrolase (157 aa).

A Nudix hydrolase domain is found at 6–149 (SYRPNVAAVI…KRKVYRRVID (144 aa)). The Nudix box motif lies at 43-64 (GGIDEGETPEDALYRELLEEIG).

This sequence belongs to the Nudix hydrolase family. RppH subfamily. A divalent metal cation is required as a cofactor.

Its function is as follows. Accelerates the degradation of transcripts by removing pyrophosphate from the 5'-end of triphosphorylated RNA, leading to a more labile monophosphorylated state that can stimulate subsequent ribonuclease cleavage. This Sulfurovum sp. (strain NBC37-1) protein is RNA pyrophosphohydrolase.